Reading from the N-terminus, the 86-residue chain is Small ribosomal subunit protein uS17 (86 aa).

Belongs to the universal ribosomal protein uS17 family. Part of the 30S ribosomal subunit.

One of the primary rRNA binding proteins, it binds specifically to the 5'-end of 16S ribosomal RNA. In Caldicellulosiruptor bescii (strain ATCC BAA-1888 / DSM 6725 / KCTC 15123 / Z-1320) (Anaerocellum thermophilum), this protein is Small ribosomal subunit protein uS17.